A 160-amino-acid polypeptide reads, in one-letter code: SsrA-binding protein (160 aa).

It belongs to the SmpB family.

It is found in the cytoplasm. Functionally, required for rescue of stalled ribosomes mediated by trans-translation. Binds to transfer-messenger RNA (tmRNA), required for stable association of tmRNA with ribosomes. tmRNA and SmpB together mimic tRNA shape, replacing the anticodon stem-loop with SmpB. tmRNA is encoded by the ssrA gene; the 2 termini fold to resemble tRNA(Ala) and it encodes a 'tag peptide', a short internal open reading frame. During trans-translation Ala-aminoacylated tmRNA acts like a tRNA, entering the A-site of stalled ribosomes, displacing the stalled mRNA. The ribosome then switches to translate the ORF on the tmRNA; the nascent peptide is terminated with the 'tag peptide' encoded by the tmRNA and targeted for degradation. The ribosome is freed to recommence translation, which seems to be the essential function of trans-translation. This Yersinia pseudotuberculosis serotype O:1b (strain IP 31758) protein is SsrA-binding protein.